The following is a 624-amino-acid chain: Polycystin-2-like protein 2 (624 aa).

The Cytoplasmic portion of the chain corresponds to 1-31; that stretch reads MAEASRWHRGGASKHKLHYRKEVEITTTLQE. A helical membrane pass occupies residues 32–52; sequence LLLYFIFLINLCILTFGMVNP. Topologically, residues 53–276 are extracellular; it reads HMYYLNKVMS…YSVKLLRYVS (224 aa). N-linked (GlcNAc...) asparagine glycans are attached at residues asparagine 115 and asparagine 138. A helical membrane pass occupies residues 277–297; that stretch reads YYDYFIASCEITFCIFLFVFT. Topologically, residues 298 to 314 are cytoplasmic; the sequence is TQEVKKIKEFKSAYFKS. The helical transmembrane segment at 315-335 threads the bilayer; it reads IWNWLELLLLLLCFVAVSFNT. Residues 336–360 lie on the Extracellular side of the membrane; it reads YYNVQIFLLLGQLLKSTEKYSDFYF. A helical membrane pass occupies residues 361–381; that stretch reads LACWHIYYNNIIAITIFFAWI. The Cytoplasmic portion of the chain corresponds to 382-406; that stretch reads KIFKFISFNKTMSQLSSTLSRCVKD. Residues 407-427 traverse the membrane as a helical segment; the sequence is IVGFAIMFFIIFFAYAQLGFL. Residues 428–469 are Extracellular-facing; it reads VFGSQVDDFSTFQNSIFAQFRIVLGDFNFAGIQQANPILGPI. A helical transmembrane segment spans residues 470-490; that stretch reads YFITFIFFVFFVLLNMFLAII. At 491-624 the chain is on the cytoplasmic side; it reads NDTYSEVKAD…NQVVRKVSAL (134 aa). Residues 556–576 are a coiled coil; sequence ENEIQNAEQMKKWKERLEKKY.

The protein belongs to the polycystin family. In terms of assembly, interacts with TRPC1 and TRPC5. Expressed only in testis. Expressed also in brain and kidney. In terms of tissue distribution, expressed only in transformed lymphoblasts.

The protein localises to the membrane. Functionally, exhibits a lower single conductance but no spontaneous channel activity. May function as a regulator of calcium channels or a channel component involving Ca2(+) homeostasis. This Homo sapiens (Human) protein is Polycystin-2-like protein 2.